We begin with the raw amino-acid sequence, 146 residues long: Snaclec coagulation factor IX/factor X-binding protein subunit B (146 aa).

The N-terminal stretch at 1 to 23 is a signal peptide; the sequence is MGRFIFMSFGFLVVFLSLSGTAA. Residues 24 to 146 enclose the C-type lectin domain; that stretch reads DCPSDWSSYE…MAQFVCEFQA (123 aa). 3 cysteine pairs are disulfide-bonded: Cys-25–Cys-36, Cys-53–Cys-142, and Cys-119–Cys-134. Positions 64, 66, and 70 each coordinate Ca(2+). Residue Glu-143 coordinates Ca(2+).

The protein belongs to the snaclec family. Heterodimer with subunit A of IX/X-bp or IX-bp; disulfide-linked. Expressed by the venom gland.

Its subcellular location is the secreted. Functionally, when linked to subunit A of IX/X-bp, anticoagulant protein which binds to the gamma-carboxyglutamic acid-domain regions of factors IX (F9) and factor X (10) in the presence of calcium with a 1 to 1 stoichiometry. In terms of biological role, when linked to subunit A of IX-bp, anticoagulant protein which binds to the gamma-carboxyglutamic acid-domain regions of factor IX (but not to factor X) in the presence of calcium with a 1 to 1 stoichiometry. This is Snaclec coagulation factor IX/factor X-binding protein subunit B from Protobothrops flavoviridis (Habu).